The following is a 909-amino-acid chain: MTDVTVKSLAEEIQTSVDRLVQQFADAGIKKTETDFVSQKEKEALLAHLNREQGGSAGKPDKLTLQRKTRSTLNVSGTDGKSKPVAVEVRKKRTYVNRDAVEQAKAEEQAKREAEEQARREAEEKAQREAEAAAKKLVEEQAKREAEEKAKREAAEKAKRQAAESEKVTNQHTEHKQKPAQTDKTIQSEKARREAEAADLKRKAEEEMRRKVEEEAKRVAEEARRMAEENQDKWSSDSDSIDSDDYHVTTSRHARAAEDENDAKVEGDRRARGRSGKATRQKKNNKHSESKADREEARAVGRTKGKQRKTSTLQQSFNKPVAAVNRDVVIGETITVAELANKMAVKGSQVIKAMMKMGAMATINQVIDQETAQLVAEEMGHKVILRRENELEEALMSDRDTGEAVAEPRAPVVTIMGHVDHGKTSLLDYIRSTKVASGEAGGITQHIGAYHVETDSGMITFLDTPGHAAFTSMRARGAKATDIVVLVVAADDGVMPQTIEAIQHAKAASVPVVVAVNKIDKPEADPDRVKSELSQHGVQPEEWGGETQFINVSAKAGIGIDELLDAILLQAEVLELKAVRSGMASGVVIESFLDKGRGPVATVLVQEGTLNKGDIVLCGFEYGRVRAMRDELGREVFSAGPSIPVEILGLSNVPAAGDEATVVRDEKKAREVALYRQGKFREVKLARQQKSKLENMFANMEEGEVSELNIVLKSDVQGSCEAIREALEQLSTDEVKVKIIGSGVGGITETDATLAAASNAIILGFNVRADASARRVVENESLDLRYYSVIYSLIDEVKQAMSGMLAPEYKQQIMGLAEVRDVFKSPKFGAIAGCMVTEGTIKRNNPIRVLRDNVVIYEGELESLRRFKDDVNEVRNGMECGIGVKNYNDVRVGDMIEVFEIIEVKRSIA.

The segment at L49 to Q314 is disordered. 3 stretches are compositionally biased toward basic and acidic residues: residues D99–Q177, I186–S236, and R255–R270. Over residues A271 to N285 the composition is skewed to basic residues. A compositionally biased stretch (basic and acidic residues) spans K286–A299. Residues P408–K577 enclose the tr-type G domain. The tract at residues G417–T424 is G1. G417–T424 is a GTP binding site. The segment at G442 to H446 is G2. Positions D463 to G466 are G3. GTP-binding positions include D463–H467 and N517–D520. Positions N517–D520 are G4. The tract at residues S553–K555 is G5.

Belongs to the TRAFAC class translation factor GTPase superfamily. Classic translation factor GTPase family. IF-2 subfamily.

It is found in the cytoplasm. One of the essential components for the initiation of protein synthesis. Protects formylmethionyl-tRNA from spontaneous hydrolysis and promotes its binding to the 30S ribosomal subunits. Also involved in the hydrolysis of GTP during the formation of the 70S ribosomal complex. The sequence is that of Translation initiation factor IF-2 from Photorhabdus laumondii subsp. laumondii (strain DSM 15139 / CIP 105565 / TT01) (Photorhabdus luminescens subsp. laumondii).